The following is a 91-amino-acid chain: Small ribosomal subunit protein uS19 (91 aa).

The protein belongs to the universal ribosomal protein uS19 family.

In terms of biological role, protein S19 forms a complex with S13 that binds strongly to the 16S ribosomal RNA. This chain is Small ribosomal subunit protein uS19, found in Cupriavidus necator (strain ATCC 17699 / DSM 428 / KCTC 22496 / NCIMB 10442 / H16 / Stanier 337) (Ralstonia eutropha).